The sequence spans 260 residues: Emerin (260 aa).

Position 1 is an N-acetylmethionine (Met1). The 45-residue stretch at 1 to 45 (MDDYAVLSDTELAAVLRQYNIPHGPILGSTRKLYEKKIFEYETQR) folds into the LEM domain. Phosphoserine occurs at positions 8 and 29. Residues 46-224 (RRLSPPSSSS…PTAALGQDRQ (179 aa)) form an interaction with F-actin region. The residue at position 49 (Ser49) is a Phosphoserine; by PKA. 8 positions are modified to phosphoserine: Ser54, Ser69, Ser72, Ser88, Ser99, Ser142, Ser143, and Ser144. The residue at position 162 (Tyr162) is a Phosphotyrosine. The tract at residues 169–188 (RPISNVSRSSLGLSYYPRSS) is interaction with CTNNB1. Phosphoserine occurs at positions 172, 175, and 177. Residues 184 to 206 (YPRSSTSSVSSSSSSPSSWLTRR) form a disordered region. A compositionally biased stretch (low complexity) spans 187–201 (SSTSSVSSSSSSPSS). Residues 225-245 (VPLWGQLLLFLAFATFLLFVY) form a helical membrane-spanning segment.

In terms of assembly, interacts with lamins A and C, BANF1, GMCL, BCLAF1 and YTHDC1/YT521. Interacts with TMEM43; the interaction retains emerin in the inner nuclear membrane. Interacts with ACTB, SPTAN1, F-actin, CTNNB1 and beta-tubulin. Interacts with SUN1 and SUN2. Interacts with TMEM201. Interacts with NEMP1.

The protein localises to the nucleus inner membrane. The protein resides in the nucleus outer membrane. In terms of biological role, stabilizes and promotes the formation of a nuclear actin cortical network. Stimulates actin polymerization in vitro by binding and stabilizing the pointed end of growing filaments. Inhibits beta-catenin activity by preventing its accumulation in the nucleus. Acts by influencing the nuclear accumulation of beta-catenin through a CRM1-dependent export pathway. Links centrosomes to the nuclear envelope via a microtubule association. Required for proper localization of non-farnesylated prelamin-A/C. Together with NEMP1, contributes to nuclear envelope stiffness in germ cells. The chain is Emerin (Emd) from Rattus norvegicus (Rat).